The sequence spans 256 residues: UPF0246 protein HRM2_41860 (256 aa).

It belongs to the UPF0246 family.

This Desulforapulum autotrophicum (strain ATCC 43914 / DSM 3382 / VKM B-1955 / HRM2) (Desulfobacterium autotrophicum) protein is UPF0246 protein HRM2_41860.